The primary structure comprises 512 residues: Putative ribose/galactose/methyl galactoside import ATP-binding protein 2 (512 aa).

ABC transporter domains lie at 14–251 and 262–507; these read IALT…VGRQ and TSGN…TQRE. 46–53 lines the ATP pocket; that stretch reads GENGAGKS.

Belongs to the ABC transporter superfamily. Carbohydrate importer 2 (CUT2) (TC 3.A.1.2) family.

It is found in the cell inner membrane. The enzyme catalyses D-ribose(out) + ATP + H2O = D-ribose(in) + ADP + phosphate + H(+). The catalysed reaction is D-galactose(out) + ATP + H2O = D-galactose(in) + ADP + phosphate + H(+). Its function is as follows. Part of an ABC transporter complex involved in carbohydrate import. Could be involved in ribose, galactose and/or methyl galactoside import. Responsible for energy coupling to the transport system. The chain is Putative ribose/galactose/methyl galactoside import ATP-binding protein 2 from Burkholderia cenocepacia (strain HI2424).